The following is a 114-amino-acid chain: Large ribosomal subunit protein uL24 (114 aa).

This sequence belongs to the universal ribosomal protein uL24 family. In terms of assembly, part of the 50S ribosomal subunit.

In terms of biological role, one of two assembly initiator proteins, it binds directly to the 5'-end of the 23S rRNA, where it nucleates assembly of the 50S subunit. One of the proteins that surrounds the polypeptide exit tunnel on the outside of the subunit. In Acidothermus cellulolyticus (strain ATCC 43068 / DSM 8971 / 11B), this protein is Large ribosomal subunit protein uL24.